The sequence spans 497 residues: Glycerol kinase (497 aa).

Residue Thr11 participates in ADP binding. Residues Thr11, Ser12, and Ser13 each coordinate ATP. Position 11 (Thr11) interacts with sn-glycerol 3-phosphate. Arg15 serves as a coordination point for ADP. Residues Arg81, Glu82, Tyr133, and Asp242 each contribute to the sn-glycerol 3-phosphate site. Arg81, Glu82, Tyr133, Asp242, and Gln243 together coordinate glycerol. Residues Thr264 and Gly307 each contribute to the ADP site. Positions 264, 307, 311, and 412 each coordinate ATP. ADP is bound by residues Gly412 and Asn416.

Belongs to the FGGY kinase family.

It catalyses the reaction glycerol + ATP = sn-glycerol 3-phosphate + ADP + H(+). The protein operates within polyol metabolism; glycerol degradation via glycerol kinase pathway; sn-glycerol 3-phosphate from glycerol: step 1/1. With respect to regulation, inhibited by fructose 1,6-bisphosphate (FBP). Functionally, key enzyme in the regulation of glycerol uptake and metabolism. Catalyzes the phosphorylation of glycerol to yield sn-glycerol 3-phosphate. This chain is Glycerol kinase, found in Variovorax paradoxus (strain S110).